The chain runs to 135 residues: Large-conductance mechanosensitive channel (135 aa).

Transmembrane regions (helical) follow at residues 10–30 (FAMRGNVVDLAVGVIIGAAFG) and 76–96 (GVFIQNVFDFVIVAFAIFLAI).

The protein belongs to the MscL family. In terms of assembly, homopentamer.

The protein localises to the cell inner membrane. In terms of biological role, channel that opens in response to stretch forces in the membrane lipid bilayer. May participate in the regulation of osmotic pressure changes within the cell. This Cronobacter sakazakii (strain ATCC BAA-894) (Enterobacter sakazakii) protein is Large-conductance mechanosensitive channel.